The sequence spans 234 residues: Glucosamine-6-phosphate deaminase (234 aa).

The Proton acceptor; for enolization step role is filled by aspartate 63. The active-site For ring-opening step is the asparagine 129. Histidine 131 (proton acceptor; for ring-opening step) is an active-site residue. The active-site For ring-opening step is glutamate 136.

The protein belongs to the glucosamine/galactosamine-6-phosphate isomerase family. NagB subfamily.

It catalyses the reaction alpha-D-glucosamine 6-phosphate + H2O = beta-D-fructose 6-phosphate + NH4(+). The protein operates within amino-sugar metabolism; N-acetylneuraminate degradation; D-fructose 6-phosphate from N-acetylneuraminate: step 5/5. In terms of biological role, catalyzes the reversible isomerization-deamination of glucosamine 6-phosphate (GlcN6P) to form fructose 6-phosphate (Fru6P) and ammonium ion. In Listeria monocytogenes serovar 1/2a (strain ATCC BAA-679 / EGD-e), this protein is Glucosamine-6-phosphate deaminase.